The sequence spans 324 residues: Probable acrylyl-CoA reductase AcuI (324 aa).

Residues Tyr41, Ser156–Val159, Ser178–Arg180, Arg198, Leu242, Ile256, Ser267, and Asn313 each bind NADP(+).

Belongs to the zinc-containing alcohol dehydrogenase family. Acrylyl-CoA reductase subfamily. As to quaternary structure, homodimer.

Its subcellular location is the cytoplasm. The catalysed reaction is propanoyl-CoA + NADP(+) = acryloyl-CoA + NADPH + H(+). Its function is as follows. Probably catalyzes the NADPH-dependent reduction of acrylyl-CoA to propanoyl-CoA. The chain is Probable acrylyl-CoA reductase AcuI (acuI) from Escherichia coli (strain K12).